Reading from the N-terminus, the 262-residue chain is UPF0758 protein BTH_I0781 (262 aa).

Residues 1–45 are disordered; sequence MQYEIVSAGENVGDEPERERPVAQAAAAPGIPRPAALPAAGAARR. The span at 22–43 shows a compositional bias: low complexity; it reads VAQAAAAPGIPRPAALPAAGAA. Residues 140–262 enclose the MPN domain; that stretch reads LVDSPGAVDD…TFSFAQAGWI (123 aa). Zn(2+) is bound by residues histidine 211, histidine 213, and aspartate 224. The short motif at 211 to 224 is the JAMM motif element; that stretch reads HNHPSGAVRPSAAD.

It belongs to the UPF0758 family.

The protein is UPF0758 protein BTH_I0781 of Burkholderia thailandensis (strain ATCC 700388 / DSM 13276 / CCUG 48851 / CIP 106301 / E264).